Consider the following 879-residue polypeptide: Valine--tRNA ligase (879 aa).

Positions 45-55 (PNVTGKLHLGH) match the 'HIGH' region motif. The short motif at 521 to 525 (KMSKS) is the 'KMSKS' region element. An ATP-binding site is contributed by Lys524. Positions 806–879 (LTELVNVDEE…ERIQDLKESK (74 aa)) form a coiled coil.

It belongs to the class-I aminoacyl-tRNA synthetase family. ValS type 1 subfamily. In terms of assembly, monomer.

The protein resides in the cytoplasm. The enzyme catalyses tRNA(Val) + L-valine + ATP = L-valyl-tRNA(Val) + AMP + diphosphate. In terms of biological role, catalyzes the attachment of valine to tRNA(Val). As ValRS can inadvertently accommodate and process structurally similar amino acids such as threonine, to avoid such errors, it has a 'posttransfer' editing activity that hydrolyzes mischarged Thr-tRNA(Val) in a tRNA-dependent manner. In Lactobacillus acidophilus (strain ATCC 700396 / NCK56 / N2 / NCFM), this protein is Valine--tRNA ligase.